We begin with the raw amino-acid sequence, 619 residues long: Phosphomethylpyrimidine synthase (619 aa).

Residues 1–11 are compositionally biased toward polar residues; that stretch reads MHEQRSLTMNA. The disordered stretch occupies residues 1-25; sequence MHEQRSLTMNALTPAVSTGPLPASR. Residues Asn-220, Met-249, Tyr-278, His-314, 334–336, 375–378, and Glu-414 each bind substrate; these read SRG and DGLR. His-418 provides a ligand contact to Zn(2+). A substrate-binding site is contributed by Tyr-441. Zn(2+) is bound at residue His-482. The [4Fe-4S] cluster site is built by Cys-562, Cys-565, and Cys-570.

The protein belongs to the ThiC family. Homodimer. It depends on [4Fe-4S] cluster as a cofactor.

The catalysed reaction is 5-amino-1-(5-phospho-beta-D-ribosyl)imidazole + S-adenosyl-L-methionine = 4-amino-2-methyl-5-(phosphooxymethyl)pyrimidine + CO + 5'-deoxyadenosine + formate + L-methionine + 3 H(+). Its pathway is cofactor biosynthesis; thiamine diphosphate biosynthesis. Catalyzes the synthesis of the hydroxymethylpyrimidine phosphate (HMP-P) moiety of thiamine from aminoimidazole ribotide (AIR) in a radical S-adenosyl-L-methionine (SAM)-dependent reaction. This is Phosphomethylpyrimidine synthase from Mesorhizobium japonicum (strain LMG 29417 / CECT 9101 / MAFF 303099) (Mesorhizobium loti (strain MAFF 303099)).